The primary structure comprises 404 residues: uncharacterized protein (404 aa).

The protein belongs to the lymphocryptovirus BTRF1 family.

This is an uncharacterized protein from Homo sapiens (Human).